Consider the following 496-residue polypeptide: MSSVKYDAIIIGAGVIGPTIATAFARQGRKVLIVERDWSKPDRIVGELMQPAGIKALRELGMIKAINNIRAVDCTGYYIKYYDETITIPYPLKKDACITNPVKPVPDAVDGVNDKLDSDSTLNVDDWDFDERVRGAAFHHGDFLMNLRQICRDEPNVTAVEATVTKILRDPSDPNTVIGVQTKQPSGTVDYHAKLTISCDGIYSKFRKELSPTNVPTIGSYFIGLYLKNAELPAKGKGHVLLGGHAPALIYSVSPTETRVLCVYVSSKPPSAANDAVYKYLRDNILPAIPKETVPAFKEALEERKFRIMPNQYLSAMKQGSENHKGFILLGDSLNMRHPLTGGGMTVGLNDSVLLAKLLHPKFVEDFDDHQLIAKRLKTFHRKRKNLDAVINTLSISLYSLFAADKKPLRILRNGCFKYFQRGGECVNGPIGLLSGMLPFPMLLFNHFFSVAFYSVYLNFIERGLLGFPLALFEAFEVLFTAIVIFTPYLWNEIVR.

The chain crosses the membrane as a helical span at residues 4–24 (VKYDAIIIGAGVIGPTIATAF). Residues 15–16 (VI), 35–36 (ER), arginine 43, arginine 148, valine 164, aspartate 332, and methionine 345 each bind FAD. Helical transmembrane passes span 431–451 (IGLLSGMLPFPMLLFNHFFSV) and 466–486 (LGFPLALFEAFEVLFTAIVIF).

Belongs to the squalene monooxygenase family. Requires FAD as cofactor.

The protein localises to the microsome membrane. The protein resides in the endoplasmic reticulum membrane. The catalysed reaction is squalene + reduced [NADPH--hemoprotein reductase] + O2 = (S)-2,3-epoxysqualene + oxidized [NADPH--hemoprotein reductase] + H2O + H(+). It functions in the pathway terpene metabolism; lanosterol biosynthesis; lanosterol from farnesyl diphosphate: step 2/3. With respect to regulation, activity is completely abolished by Triton X-100, deoxycholate or Cu(2+), and partially inhibited by thiol reagents, rotenone and antimycin A. The allylamine antimycotic agents naftifine and SF 86-327are potent inhibitors and show apparently non-competitive kinetics with respect to the substrate squalene. Its function is as follows. Squalene epoxidase; part of the third module of ergosterol biosynthesis pathway that includes the late steps of the pathway. Erg1 catalyzes the epoxidation of squalene into 2,3-epoxysqualene. The third module or late pathway involves the ergosterol synthesis itself through consecutive reactions that mainly occur in the endoplasmic reticulum (ER) membrane. Firstly, the squalene synthase ERG9 catalyzes the condensation of 2 farnesyl pyrophosphate moieties to form squalene, which is the precursor of all steroids. Squalene synthase is crucial for balancing the incorporation of farnesyl diphosphate (FPP) into sterol and nonsterol isoprene synthesis. Secondly, the squalene epoxidase ERG1 catalyzes the stereospecific oxidation of squalene to (S)-2,3-epoxysqualene, which is considered to be a rate-limiting enzyme in steroid biosynthesis. Then, the lanosterol synthase ERG7 catalyzes the cyclization of (S)-2,3 oxidosqualene to lanosterol, a reaction that forms the sterol core. In the next steps, lanosterol is transformed to zymosterol through a complex process involving various demethylation, reduction and desaturation reactions. The lanosterol 14-alpha-demethylase ERG11 (also known as CYP51) catalyzes C14-demethylation of lanosterol to produce 4,4'-dimethyl cholesta-8,14,24-triene-3-beta-ol, which is critical for ergosterol biosynthesis. The C-14 reductase ERG24 reduces the C14=C15 double bond of 4,4-dimethyl-cholesta-8,14,24-trienol to produce 4,4-dimethyl-cholesta-8,24-dienol. 4,4-dimethyl-cholesta-8,24-dienol is substrate of the C-4 demethylation complex ERG25-ERG26-ERG27 in which ERG25 catalyzes the three-step monooxygenation required for the demethylation of 4,4-dimethyl and 4alpha-methylsterols, ERG26 catalyzes the oxidative decarboxylation that results in a reduction of the 3-beta-hydroxy group at the C-3 carbon to an oxo group, and ERG27 is responsible for the reduction of the keto group on the C-3. ERG28 has a role as a scaffold to help anchor ERG25, ERG26 and ERG27 to the endoplasmic reticulum and ERG29 regulates the activity of the iron-containing C4-methylsterol oxidase ERG25. Then, the sterol 24-C-methyltransferase ERG6 catalyzes the methyl transfer from S-adenosyl-methionine to the C-24 of zymosterol to form fecosterol. The C-8 sterol isomerase ERG2 catalyzes the reaction which results in unsaturation at C-7 in the B ring of sterols and thus converts fecosterol to episterol. The sterol-C5-desaturase ERG3 then catalyzes the introduction of a C-5 double bond in the B ring to produce 5-dehydroepisterol. The C-22 sterol desaturase ERG5 further converts 5-dehydroepisterol into ergosta-5,7,22,24(28)-tetraen-3beta-ol by forming the C-22(23) double bond in the sterol side chain. Finally, ergosta-5,7,22,24(28)-tetraen-3beta-ol is substrate of the C-24(28) sterol reductase ERG4 to produce ergosterol. The protein is Squalene epoxidase ERG1 of Candida albicans (strain SC5314 / ATCC MYA-2876) (Yeast).